Reading from the N-terminus, the 334-residue chain is D-fructose 1,6-bisphosphatase class 2/sedoheptulose 1,7-bisphosphatase (334 aa).

Residues D33, E57, D85, and E88 each coordinate Mn(2+). Residues E88–T90, Y119, R164–R166, and D186–D188 each bind substrate. Residue E213 coordinates Mn(2+).

Belongs to the FBPase class 2 family. Homotetramer. Requires Mn(2+) as cofactor.

It carries out the reaction beta-D-fructose 1,6-bisphosphate + H2O = beta-D-fructose 6-phosphate + phosphate. The catalysed reaction is D-sedoheptulose 1,7-bisphosphate + H2O = D-sedoheptulose 7-phosphate + phosphate. It functions in the pathway carbohydrate biosynthesis; Calvin cycle. Its function is as follows. Catalyzes the hydrolysis of fructose 1,6-bisphosphate (Fru 1,6-P2) and sedoheptulose 1,7-bisphosphate (Sed 1,7-P2) to fructose 6-phosphate and sedoheptulose 7-phosphate, respectively. The chain is D-fructose 1,6-bisphosphatase class 2/sedoheptulose 1,7-bisphosphatase from Synechococcus sp. (strain CC9902).